The following is an 86-amino-acid chain: Large ribosomal subunit protein bL35m (86 aa).

The transit peptide at Met-1–Lys-18 directs the protein to the mitochondrion. The disordered stretch occupies residues Arg-45 to Glu-69.

This sequence belongs to the bacterial ribosomal protein bL35 family. Component of the mitochondrial large ribosomal subunit (mt-LSU). Mature yeast 74S mitochondrial ribosomes consist of a small (37S) and a large (54S) subunit. The 37S small subunit contains a 15S ribosomal RNA (15S mt-rRNA) and at least 32 different proteins. The 54S large subunit contains a 21S rRNA (21S mt-rRNA) and at least 45 different proteins.

It localises to the mitochondrion. Its function is as follows. Component of the mitochondrial ribosome (mitoribosome), a dedicated translation machinery responsible for the synthesis of mitochondrial genome-encoded proteins, including at least some of the essential transmembrane subunits of the mitochondrial respiratory chain. The mitoribosomes are attached to the mitochondrial inner membrane and translation products are cotranslationally integrated into the membrane. This is Large ribosomal subunit protein bL35m (new15) from Schizosaccharomyces pombe (strain 972 / ATCC 24843) (Fission yeast).